A 168-amino-acid polypeptide reads, in one-letter code: MAGINKVIIVGHLGNDPEIRTMPNGDAVANISVATSESWNDRNTGERREVTEWHRIVFYRRQAEICGEYLRKGSQVYVEGRLKTRKWQDQNGQDRYTTEIQGDVMQMLGGRNQNAGGYGNDMGGAPQSSYQARQTNNGNSYQSSRPAPQQAAPQAEPPMDGFDDDIPF.

The region spanning 4 to 109 (INKVIIVGHL…IQGDVMQMLG (106 aa)) is the SSB domain. The segment at 109-168 (GGRNQNAGGYGNDMGGAPQSSYQARQTNNGNSYQSSRPAPQQAAPQAEPPMDGFDDDIPF) is disordered. Over residues 126-145 (PQSSYQARQTNNGNSYQSSR) the composition is skewed to polar residues. Residues 146–158 (PAPQQAAPQAEPP) are compositionally biased toward low complexity. An Important for interaction with partner proteins motif is present at residues 163–168 (DDDIPF).

As to quaternary structure, homotetramer.

Functionally, plays an important role in DNA replication, recombination and repair. Binds to ssDNA and to an array of partner proteins to recruit them to their sites of action during DNA metabolism. This is Single-stranded DNA-binding protein (ssb) from Haemophilus influenzae (strain ATCC 51907 / DSM 11121 / KW20 / Rd).